A 435-amino-acid polypeptide reads, in one-letter code: Tol-Pal system protein TolB (435 aa).

The signal sequence occupies residues 1 to 26; the sequence is MKTFSLLRILIVLVGMAGAFATPAMA.

It belongs to the TolB family. The Tol-Pal system is composed of five core proteins: the inner membrane proteins TolA, TolQ and TolR, the periplasmic protein TolB and the outer membrane protein Pal. They form a network linking the inner and outer membranes and the peptidoglycan layer.

The protein localises to the periplasm. Functionally, part of the Tol-Pal system, which plays a role in outer membrane invagination during cell division and is important for maintaining outer membrane integrity. The chain is Tol-Pal system protein TolB from Allorhizobium ampelinum (strain ATCC BAA-846 / DSM 112012 / S4) (Agrobacterium vitis (strain S4)).